We begin with the raw amino-acid sequence, 185 residues long: ATP synthase subunit b (185 aa).

The chain crosses the membrane as a helical span at residues 26 to 46 (LVLIGFAILLFIVIKFVVPMF).

It belongs to the ATPase B chain family. As to quaternary structure, F-type ATPases have 2 components, F(1) - the catalytic core - and F(0) - the membrane proton channel. F(1) has five subunits: alpha(3), beta(3), gamma(1), delta(1), epsilon(1). F(0) has three main subunits: a(1), b(2) and c(10-14). The alpha and beta chains form an alternating ring which encloses part of the gamma chain. F(1) is attached to F(0) by a central stalk formed by the gamma and epsilon chains, while a peripheral stalk is formed by the delta and b chains.

Its subcellular location is the cell membrane. Its function is as follows. F(1)F(0) ATP synthase produces ATP from ADP in the presence of a proton or sodium gradient. F-type ATPases consist of two structural domains, F(1) containing the extramembraneous catalytic core and F(0) containing the membrane proton channel, linked together by a central stalk and a peripheral stalk. During catalysis, ATP synthesis in the catalytic domain of F(1) is coupled via a rotary mechanism of the central stalk subunits to proton translocation. Component of the F(0) channel, it forms part of the peripheral stalk, linking F(1) to F(0). The protein is ATP synthase subunit b of Renibacterium salmoninarum (strain ATCC 33209 / DSM 20767 / JCM 11484 / NBRC 15589 / NCIMB 2235).